Reading from the N-terminus, the 634-residue chain is MSDSFYRYDVIVIGGGHAGTEAALASARAGARTLLLTHNIETVGAMSCNPAIGGIGKGHLVKEIDALGGAMARAADLAGIQWRTLNASKGPAVRATRCQADRNLYRTAIRCIVEAQPNLTVFQAAVDDLIIHHGASEADSVRGVITQTGLRFQAPSVVLTAGTFLAGKIHVGQTQYAAGRMGDPPATTLAARLRERPFAIDRLKTGTPPRIDGRTLDYGVMAEQPGDDPLPVMSFMGQVSDHPRQVSCWITQTTEQTHEIIRNALHRSPLYSGQIEGIGPRYCPSIEDKVVRFAEKTSHQIFVEPEGLEVAEIYPNGISTSLPFDVQLALVRSIHGFANAHITRPGYAIEYDFFDPRGLKASLETKAVGGLFFAGQINGTTGYEEAAAQGLLAGLNAARHVQGLPAWSPRRDEAYLGVLVDDLITHGTTEPYRMFTSRAEYRLQLREDNADARLTGVGRAMGLVDDARWARFAAKQEAVQRETARLSALWATPGNALGREVADALGVTVSRETNVLDLIKRPELTYATLMRVPTLGPGVDDAQVAEQVEISVKYAGYLDRQRDDIARQQRHETTPIPDGFDYASVRGLSIEVQQKLERVRPQHIGQAQRIPGMTPAAISLLLVHLERARRSQVA.

FAD is bound at residue 14–19 (GGGHAG). An NAD(+)-binding site is contributed by 279 to 293 (GPRYCPSIEDKVVRF).

It belongs to the MnmG family. As to quaternary structure, homodimer. Heterotetramer of two MnmE and two MnmG subunits. The cofactor is FAD.

It is found in the cytoplasm. In terms of biological role, NAD-binding protein involved in the addition of a carboxymethylaminomethyl (cmnm) group at the wobble position (U34) of certain tRNAs, forming tRNA-cmnm(5)s(2)U34. The polypeptide is tRNA uridine 5-carboxymethylaminomethyl modification enzyme MnmG (Xanthomonas axonopodis pv. citri (strain 306)).